Reading from the N-terminus, the 300-residue chain is Glutamyl-Q tRNA(Asp) synthetase (300 aa).

L-glutamate-binding positions include 14-18 (RFAPT) and glutamate 50. Residues 17–27 (PTPSGFLHFGS) carry the 'HIGH' region motif. Positions 106, 108, 120, and 124 each coordinate Zn(2+). Positions 177 and 195 each coordinate L-glutamate. A 'KMSKS' region motif is present at residues 233–237 (KLGKS). Residue lysine 236 participates in ATP binding.

This sequence belongs to the class-I aminoacyl-tRNA synthetase family. GluQ subfamily. Zn(2+) is required as a cofactor.

Its function is as follows. Catalyzes the tRNA-independent activation of glutamate in presence of ATP and the subsequent transfer of glutamate onto a tRNA(Asp). Glutamate is transferred on the 2-amino-5-(4,5-dihydroxy-2-cyclopenten-1-yl) moiety of the queuosine in the wobble position of the QUC anticodon. This chain is Glutamyl-Q tRNA(Asp) synthetase, found in Pseudomonas putida (strain ATCC 47054 / DSM 6125 / CFBP 8728 / NCIMB 11950 / KT2440).